Reading from the N-terminus, the 292-residue chain is 1D-myo-inositol 2-acetamido-2-deoxy-alpha-D-glucopyranoside deacetylase (292 aa).

Zn(2+) contacts are provided by H12, D15, and H147.

Belongs to the MshB deacetylase family. The cofactor is Zn(2+).

The catalysed reaction is 1D-myo-inositol 2-acetamido-2-deoxy-alpha-D-glucopyranoside + H2O = 1D-myo-inositol 2-amino-2-deoxy-alpha-D-glucopyranoside + acetate. Catalyzes the deacetylation of 1D-myo-inositol 2-acetamido-2-deoxy-alpha-D-glucopyranoside (GlcNAc-Ins) in the mycothiol biosynthesis pathway. In Rhodococcus opacus (strain B4), this protein is 1D-myo-inositol 2-acetamido-2-deoxy-alpha-D-glucopyranoside deacetylase.